Here is a 449-residue protein sequence, read N- to C-terminus: Immunoglobulin gamma-1 heavy chain (449 aa).

At glutamine 1 the chain carries Pyrrolidone carboxylic acid. 4 consecutive Ig-like domains span residues 1-96 (QVQL…VYYC), 125-218 (PSVF…KKVE), 240-339 (PSVF…KTIS), and 348-444 (PQVY…KSLS). Residues 1–119 (QVQLVQSGGG…GQGTLVTVSS (119 aa)) are variable (V) domain, involved in antigen recognition. Intrachain disulfides connect cysteine 22–cysteine 96, cysteine 146–cysteine 202, cysteine 263–cysteine 323, and cysteine 369–cysteine 427. Residue asparagine 73 is glycosylated (N-linked (GlcNAc...) asparagine). The constant (C) domain stretch occupies residues 120 to 449 (ASTKGPSVFP…QKSLSLSPGK (330 aa)). Asparagine 299 carries N-linked (GlcNAc...) (complex) asparagine glycosylation.

Immunoglobulins are composed of two identical heavy chains and two identical light chains; disulfide-linked.

The protein localises to the secreted. The protein resides in the cell membrane. Immunoglobulins, also known as antibodies, are membrane-bound or secreted glycoproteins produced by B lymphocytes. In the recognition phase of humoral immunity, the membrane-bound immunoglobulins serve as receptors which, upon binding of a specific antigen, trigger the clonal expansion and differentiation of B lymphocytes into immunoglobulins-secreting plasma cells. Secreted immunoglobulins mediate the effector phase of humoral immunity, which results in the elimination of bound antigens. The antigen binding site is formed by the variable domain of one heavy chain, together with that of its associated light chain. Thus, each immunoglobulin has two antigen binding sites with remarkable affinity for a particular antigen. The variable domains are assembled by a process called V-(D)-J rearrangement and can then be subjected to somatic hypermutations which, after exposure to antigen and selection, allow affinity maturation for a particular antigen. In Homo sapiens (Human), this protein is Immunoglobulin gamma-1 heavy chain.